Reading from the N-terminus, the 141-residue chain is Putative pre-16S rRNA nuclease (141 aa).

Belongs to the YqgF nuclease family.

The protein resides in the cytoplasm. In terms of biological role, could be a nuclease involved in processing of the 5'-end of pre-16S rRNA. The chain is Putative pre-16S rRNA nuclease from Aliivibrio fischeri (strain ATCC 700601 / ES114) (Vibrio fischeri).